The sequence spans 257 residues: Spermidine/putrescine transport system permease protein PotC (257 aa).

At methionine 1–arginine 7 the chain is on the cytoplasmic side. The helical transmembrane segment at asparagine 8–threonine 27 threads the bilayer. Residues asparagine 28 to threonine 65 are Periplasmic-facing. Residues alanine 60–serine 248 form the ABC transmembrane type-1 domain. Residues isoleucine 66–leucine 85 traverse the membrane as a helical segment. Residues tyrosine 86–leucine 100 are Cytoplasmic-facing. The chain crosses the membrane as a helical span at residues phenylalanine 101–methionine 120. Over valine 121 to phenylalanine 128 the chain is Periplasmic. The helical transmembrane segment at tryptophan 129–phenylalanine 148 threads the bilayer. Residues serine 149 to isoleucine 176 lie on the Cytoplasmic side of the membrane. A helical membrane pass occupies residues isoleucine 177–serine 196. At leucine 197 to asparagine 231 the chain is on the periplasmic side. Residues alanine 232–isoleucine 251 traverse the membrane as a helical segment. Residues threonine 252 to histidine 257 lie on the Cytoplasmic side of the membrane.

The protein belongs to the binding-protein-dependent transport system permease family. CysTW subfamily.

The protein resides in the cell inner membrane. Functionally, required for the activity of the bacterial periplasmic transport system of putrescine and spermidine. The sequence is that of Spermidine/putrescine transport system permease protein PotC (potC) from Haemophilus influenzae (strain ATCC 51907 / DSM 11121 / KW20 / Rd).